Consider the following 406-residue polypeptide: MAKAHKDVKKIVLAYSGGLDTSIILKWLKNEYGCEVIAFSADLGQGDELAPIRDKAIATGADKVYIDDLKEEFVKDFVFPMFRANAIYEGHYLLGTSIARPLIAKRQMEIAKIEGADAVSHGATGKGNDQVRFELAYYHFDPAITVVAPWREWKLNSRQALVNYARKNGIPIPVTKKRPWSSDRNLLHISFEGGILEDTWAEPPENMYVLTKAPEKAPNKPQFVEIEFKNGNAVAVDGEKMSPAQLLAHLNYIGGEHGIGRVDLLENRSVGMKSRGVYETPGGTILREAHSAVEQITMDREVMRIRDSLIPEYARQVYAGYWFSPEREMLQTLIDDSQKCVNGVARVKLYKGHCRTVGRKSETNSLFNLDFATFEKDQVFNQADATGFIKINSLRLRIRSLMQGKK.

Residues 14–22 (AYSGGLDTS) and Ala41 contribute to the ATP site. Residues Tyr92 and Ser97 each coordinate L-citrulline. Gly122 provides a ligand contact to ATP. L-aspartate is bound by residues Thr124, Asn128, and Asp129. L-citrulline is bound at residue Asn128. Positions 132, 181, 190, 266, and 278 each coordinate L-citrulline.

The protein belongs to the argininosuccinate synthase family. Type 1 subfamily. In terms of assembly, homotetramer.

It is found in the cytoplasm. It catalyses the reaction L-citrulline + L-aspartate + ATP = 2-(N(omega)-L-arginino)succinate + AMP + diphosphate + H(+). Its pathway is amino-acid biosynthesis; L-arginine biosynthesis; L-arginine from L-ornithine and carbamoyl phosphate: step 2/3. This Geobacter sulfurreducens (strain ATCC 51573 / DSM 12127 / PCA) protein is Argininosuccinate synthase.